A 771-amino-acid chain; its full sequence is Tetratricopeptide repeat-containing protein trd-1 (771 aa).

TPR repeat units lie at residues 389 to 415 (LEMW…IRRL), 416 to 449 (IEQK…SDDR), 451 to 484 (ARAH…QPIQ), 485 to 518 (LGTW…QPDH), 520 to 552 (EAWN…NYEH), and 553 to 586 (PNVW…NKRG).

The protein belongs to the TTC27 family. Expressed in the spermatheca.

The protein resides in the cytoplasm. In terms of biological role, developmental protein required for cell fate determination in both the germline and seam cells of the developing epidermis. Specifically, involved in sex determination and may function in parallel or downstream of other sex determination factors, including tra-2 and fem-3, to promote oogenesis in its role in the regulation of the switch from spermatogenesis to oogenesis in the gonads. Also implicated in the mitosis to meiosis switch in distal tip cells. This is Tetratricopeptide repeat-containing protein trd-1 from Caenorhabditis elegans.